We begin with the raw amino-acid sequence, 66 residues long: Large ribosomal subunit protein bL35 (66 aa).

Positions 1–26 are enriched in basic residues; the sequence is MPKMKTHRGSAKRFKKTGSGKLKRSH. Residues 1-45 are disordered; it reads MPKMKTHRGSAKRFKKTGSGKLKRSHAYTSHLFANKSQKQKRKLR.

Belongs to the bacterial ribosomal protein bL35 family.

In Bacillus velezensis (strain DSM 23117 / BGSC 10A6 / LMG 26770 / FZB42) (Bacillus amyloliquefaciens subsp. plantarum), this protein is Large ribosomal subunit protein bL35.